Here is a 735-residue protein sequence, read N- to C-terminus: Photosystem I P700 chlorophyll a apoprotein A2 (735 aa).

8 helical membrane-spanning segments follow: residues 46–69, 135–158, 175–199, 273–291, 333–356, 372–398, 420–442, and 518–536; these read LFST…FHIA, LYQG…LHLQ, LNHH…HVAI, IAHH…GHMY, LHFQ…QHMY, AALY…IFFI, AIIS…LYVH, and FLVH…LILV. Positions 560 and 569 each coordinate [4Fe-4S] cluster. Transmembrane regions (helical) follow at residues 576 to 597 and 644 to 666; these read AFYL…YWHW and LAVW…MFLI. His655, Met663, and Tyr671 together coordinate chlorophyll a. Phylloquinone is bound at residue Trp672. The helical transmembrane segment at 708–728 threads the bilayer; the sequence is VVGLAHFSVGYVLTYAAFLIA.

The protein belongs to the PsaA/PsaB family. The PsaA/B heterodimer binds the P700 chlorophyll special pair and subsequent electron acceptors. PSI consists of a core antenna complex that captures photons, and an electron transfer chain that converts photonic excitation into a charge separation. The cyanobacterial PSI reaction center is composed of one copy each of PsaA,B,C,D,E,F,I,J,K,L,M and X, and forms trimeric complexes. Requires PSI electron transfer chain: 5 chlorophyll a, 1 chlorophyll a', 2 phylloquinones and 3 4Fe-4S clusters. PSI core antenna: 90 chlorophyll a, 22 carotenoids, 3 phospholipids and 1 galactolipid. P700 is a chlorophyll a/chlorophyll a' dimer, A0 is one or more chlorophyll a, A1 is one or both phylloquinones and FX is a shared 4Fe-4S iron-sulfur center. as cofactor.

It is found in the cellular thylakoid membrane. It carries out the reaction reduced [plastocyanin] + hnu + oxidized [2Fe-2S]-[ferredoxin] = oxidized [plastocyanin] + reduced [2Fe-2S]-[ferredoxin]. Its function is as follows. PsaA and PsaB bind P700, the primary electron donor of photosystem I (PSI), as well as the electron acceptors A0, A1 and FX. PSI is a plastocyanin/cytochrome c6-ferredoxin oxidoreductase, converting photonic excitation into a charge separation, which transfers an electron from the donor P700 chlorophyll pair to the spectroscopically characterized acceptors A0, A1, FX, FA and FB in turn. Oxidized P700 is reduced on the lumenal side of the thylakoid membrane by plastocyanin or cytochrome c6. In Synechococcus sp. (strain CC9902), this protein is Photosystem I P700 chlorophyll a apoprotein A2.